We begin with the raw amino-acid sequence, 366 residues long: MNNVILYCRPGFEKECSAEVTEKAAAREIFGFARVKDNSGYVVFVCYQHEEADRLVRVLPLRSLIFARQMILVGELLRDLPAEDRITQIAGMLTGAVAGAGEVRVEVPDTNESKELMKFCRKLTVPLRAALRAQRILKGEEHRSPQVIHVLFIAPGCCYAGYSYRDNHSPFYMGIPRLRFPPDAPSRSMLKLEEAFHVFIPADEWDERLGSGMYAVDLGACPGGWTYQLVKRSMMVHAVDNGTMDEALMATGQVIHHRADGFRFEPPRNNVYWLVCDMVEKPSRVAQLAADWLVKGWCREAIFNLKLPMKKRYEEVSQNLRLLIDHLQVNGVHGEVHAKQLYHDREEVTVHARRFWSAVPGRRDER.

S-adenosyl-L-methionine is bound by residues S188, 221-224 (CPGG), D240, D260, and D277. The active-site Proton acceptor is K306.

The protein belongs to the class I-like SAM-binding methyltransferase superfamily. RNA methyltransferase RlmE family. RlmM subfamily. Monomer.

The protein resides in the cytoplasm. The catalysed reaction is cytidine(2498) in 23S rRNA + S-adenosyl-L-methionine = 2'-O-methylcytidine(2498) in 23S rRNA + S-adenosyl-L-homocysteine + H(+). Functionally, catalyzes the 2'-O-methylation at nucleotide C2498 in 23S rRNA. This is Ribosomal RNA large subunit methyltransferase M from Sodalis glossinidius (strain morsitans).